The primary structure comprises 223 residues: Urease accessory protein UreF (223 aa).

The protein belongs to the UreF family. UreD, UreF and UreG form a complex that acts as a GTP-hydrolysis-dependent molecular chaperone, activating the urease apoprotein by helping to assemble the nickel containing metallocenter of UreC. The UreE protein probably delivers the nickel.

Its subcellular location is the cytoplasm. Required for maturation of urease via the functional incorporation of the urease nickel metallocenter. The protein is Urease accessory protein UreF of Rhizobium etli (strain CIAT 652).